A 336-amino-acid polypeptide reads, in one-letter code: Galactose/methyl galactoside import permease protein MglC (336 aa).

8 helical membrane passes run 17-37, 53-73, 107-127, 128-148, 181-201, 231-251, 257-277, and 306-326; these read AIYF…PTFL, LIIA…LSAG, VVIL…GLVI, AYLN…IYGF, FKLS…WIMW, LVAI…LEAG, TNNL…VGGV, and IGVN…LAVA.

The protein belongs to the binding-protein-dependent transport system permease family. AraH/RbsC subfamily. As to quaternary structure, the complex is composed of one ATP-binding protein (MglA), two transmembrane proteins (MglC) and a solute-binding protein (MglB).

It localises to the cell inner membrane. Part of the ABC transporter complex MglABC involved in galactose/methyl galactoside import. Probably responsible for the translocation of the substrate across the membrane. This is Galactose/methyl galactoside import permease protein MglC (mglC) from Haemophilus influenzae (strain ATCC 51907 / DSM 11121 / KW20 / Rd).